The chain runs to 211 residues: Large ribosomal subunit protein uL3 (211 aa).

Position 150 is an N5-methylglutamine (Gln150).

This sequence belongs to the universal ribosomal protein uL3 family. As to quaternary structure, part of the 50S ribosomal subunit. Forms a cluster with proteins L14 and L19. In terms of processing, methylated by PrmB.

In terms of biological role, one of the primary rRNA binding proteins, it binds directly near the 3'-end of the 23S rRNA, where it nucleates assembly of the 50S subunit. In Pseudomonas fluorescens (strain ATCC BAA-477 / NRRL B-23932 / Pf-5), this protein is Large ribosomal subunit protein uL3.